Consider the following 299-residue polypeptide: ATP synthase gamma chain (299 aa).

It belongs to the ATPase gamma chain family. As to quaternary structure, F-type ATPases have 2 components, CF(1) - the catalytic core - and CF(0) - the membrane proton channel. CF(1) has five subunits: alpha(3), beta(3), gamma(1), delta(1), epsilon(1). CF(0) has three main subunits: a, b and c.

The protein resides in the cell membrane. Produces ATP from ADP in the presence of a proton gradient across the membrane. The gamma chain is believed to be important in regulating ATPase activity and the flow of protons through the CF(0) complex. In Clavibacter michiganensis subsp. michiganensis (strain NCPPB 382), this protein is ATP synthase gamma chain.